The chain runs to 360 residues: Alpha-methylacyl-CoA racemase (360 aa).

Substrate-binding positions include arginine 38, 59–62 (ADLK), 83–85 (GYR), arginine 91, and 125–130 (GHDINY). Histidine 126 functions as the Proton acceptor in the catalytic mechanism. The active-site Proton donor is the aspartate 156.

The protein belongs to the CoA-transferase III family. As to quaternary structure, homodimer.

It catalyses the reaction a (2S)-2-methylacyl-CoA = a (2R)-2-methylacyl-CoA. It carries out the reaction (2S)-2-methyltetradecanoyl-CoA = (2R)-2-methyltetradecanoyl-CoA. The enzyme catalyses (2R)-pristanoyl-CoA = (2S)-pristanoyl-CoA. The catalysed reaction is (25S)-3-oxocholest-4-en-26-oyl-CoA = (25R)-3-oxocholest-4-en-26-oyl-CoA. It catalyses the reaction (2S)-ibuprofenoyl-CoA = (2R)-ibuprofenoyl-CoA. Inactivated by N,N-dialkylcarbamoyl-CoA substrate-product analogs. Its function is as follows. Catalyzes the epimerization of (2R)- and (2S)-methylacyl-coenzyme A (CoA) thioesters. Accepts as substrates a wide range of alpha-methylacyl-CoAs, including (2R)-2-methylmyristoyl-CoA and (2S)-2-methylmyristoyl-CoA, (2R)-pristanoyl-CoA and (2S)-pristanoyl-CoA, and the cholesterol esters (25R)-3-oxo-cholest-4-en-26-oyl-CoA and (25S)-3-oxo-cholest-4-en-26-oyl-CoA. Can also catalyze the interconversion of the non-physiologic substrates (2R)-ibuprofenoyl-CoA and (2S)-ibuprofenoyl-CoA, which are potential competitive inhibitors of the enzyme. This chain is Alpha-methylacyl-CoA racemase, found in Mycobacterium tuberculosis (strain ATCC 25618 / H37Rv).